The sequence spans 424 residues: Carbohydrate sulfotransferase 8 (424 aa).

Topologically, residues Met1–Leu10 are cytoplasmic. The helical; Signal-anchor for type II membrane protein transmembrane segment at Ala11–Leu31 threads the bilayer. Residues Gln32 to Tyr424 are Lumenal-facing. The disordered stretch occupies residues Phe47–Leu107. The span at Gly66–Arg77 shows a compositional bias: basic and acidic residues. The N-linked (GlcNAc...) asparagine glycan is linked to Asn128. Residues Pro198–Asn204 and Arg258–Ser266 each bind 3'-phosphoadenylyl sulfate. N-linked (GlcNAc...) asparagine glycans are attached at residues Asn294, Asn367, and Asn415.

The protein belongs to the sulfotransferase 2 family. Predominantly expressed in pituitary gland. In brain, it is expressed in pituitary gland, cerebellum, medulla oblongata, pons, thalamus and spinal cord. Expressed in the epidermis. Expressed at lower level in lung, spleen, adrenal gland, placenta, prostate, testis, mammary gland and trachea.

The protein resides in the golgi apparatus membrane. In terms of biological role, catalyzes the transfer of sulfate to position 4 of non-reducing N-acetylgalactosamine (GalNAc) residues in both N-glycans and O-glycans. Required for biosynthesis of glycoprotein hormones lutropin and thyrotropin, by mediating sulfation of their carbohydrate structures. Only active against terminal GalNAcbeta1,GalNAcbeta. Not active toward chondroitin. The polypeptide is Carbohydrate sulfotransferase 8 (CHST8) (Homo sapiens (Human)).